Reading from the N-terminus, the 156-residue chain is Transcriptional repressor NrdR (156 aa).

The segment at 3-34 is a zinc-finger region; it reads CPFCGNVDTQVKDSRPAEDHVAIRRRRFCPAC. One can recognise an ATP-cone domain in the interval 49–139; it reads LVVIKSNGKR…VYKNFQATGD (91 aa).

Belongs to the NrdR family. Requires Zn(2+) as cofactor.

Negatively regulates transcription of bacterial ribonucleotide reductase nrd genes and operons by binding to NrdR-boxes. This Jannaschia sp. (strain CCS1) protein is Transcriptional repressor NrdR.